Here is a 319-residue protein sequence, read N- to C-terminus: Thioredoxin reductase (319 aa).

37–44 contacts FAD; sequence ERGVPGGQ. Cysteines 136 and 139 form a disulfide. 279 to 288 contacts FAD; it reads DVRAKSLRQI.

This sequence belongs to the class-II pyridine nucleotide-disulfide oxidoreductase family. As to quaternary structure, homodimer. FAD is required as a cofactor.

The protein localises to the cytoplasm. It catalyses the reaction [thioredoxin]-dithiol + NADP(+) = [thioredoxin]-disulfide + NADPH + H(+). This Listeria monocytogenes serovar 1/2a (strain ATCC BAA-679 / EGD-e) protein is Thioredoxin reductase (trxB).